The chain runs to 331 residues: Phenol 2-monooxygenase, oxygenase component DmpL (331 aa).

Belongs to the TmoE/XamoE family. The multicomponent enzyme phenol hydroxylase is formed by DmpL (P1 component), DmpM (P2 component), DmpN (P3 component), DmpO (P4 component) and DmpP (P5 component). The oxygenase component is a dimer composed of three subunits, DmpL, DmpN and DmpO (DmpLNO). DmpL interacts with the auxiliary protein DmpK (P0 component).

It catalyses the reaction phenol + NADH + O2 + H(+) = catechol + NAD(+) + H2O. Its pathway is aromatic compound metabolism; phenol degradation. Its activity is regulated as follows. Requires DmpM for efficient turnover. The activity of DmpLNO oxygenase is inhibited by dithiothreitol (DTT) by a mechanism apparently involving H(2)O(2) generation. Its function is as follows. Part of a multicomponent enzyme which catalyzes the degradation of phenol and some of its methylated derivatives. DmpL, DmpN and DmpO form the oxygenase component of the complex. Required for growth on phenol and for in vitro phenol hydroxylase activity. In Pseudomonas sp. (strain CF600), this protein is Phenol 2-monooxygenase, oxygenase component DmpL.